A 122-amino-acid polypeptide reads, in one-letter code: Large ribosomal subunit protein uL18 (122 aa).

Belongs to the universal ribosomal protein uL18 family. In terms of assembly, part of the 50S ribosomal subunit; part of the 5S rRNA/L5/L18/L25 subcomplex. Contacts the 5S and 23S rRNAs.

Its function is as follows. This is one of the proteins that bind and probably mediate the attachment of the 5S RNA into the large ribosomal subunit, where it forms part of the central protuberance. The protein is Large ribosomal subunit protein uL18 of Heliobacterium modesticaldum (strain ATCC 51547 / Ice1).